A 356-amino-acid polypeptide reads, in one-letter code: Ubiquitin-conjugating enzyme E2 Z (356 aa).

Positions 1–16 (MAESPTEEAATATAGA) are enriched in low complexity. The tract at residues 1–22 (MAESPTEEAATATAGAGAAGPG) is disordered. In terms of domain architecture, UBC core spans 101–255 (QCLLRIKRDI…IRHETIRVAV (155 aa)). Cys-190 serves as the catalytic Glycyl thioester intermediate. The segment at 334 to 356 (NAEMDSDSSSSGTETDLHGSLRV) is disordered. Ser-339 is subject to Phosphoserine.

This sequence belongs to the ubiquitin-conjugating enzyme family.

It localises to the cytoplasm. The protein localises to the nucleus. The enzyme catalyses S-ubiquitinyl-[E1 ubiquitin-activating enzyme]-L-cysteine + [E2 ubiquitin-conjugating enzyme]-L-cysteine = [E1 ubiquitin-activating enzyme]-L-cysteine + S-ubiquitinyl-[E2 ubiquitin-conjugating enzyme]-L-cysteine.. It functions in the pathway protein modification; protein ubiquitination. Its function is as follows. Catalyzes the covalent attachment of ubiquitin to other proteins. Specific substrate for UBA6, not charged with ubiquitin by UBE1. May be involved in apoptosis regulation. The protein is Ubiquitin-conjugating enzyme E2 Z (Ube2z) of Rattus norvegicus (Rat).